The following is a 299-amino-acid chain: Nucleotide-binding protein AFE_3021 (299 aa).

11–18 (GLSGSGKS) serves as a coordination point for ATP. 62 to 65 (DVRN) serves as a coordination point for GTP.

This sequence belongs to the RapZ-like family.

Its function is as follows. Displays ATPase and GTPase activities. This is Nucleotide-binding protein AFE_3021 from Acidithiobacillus ferrooxidans (strain ATCC 23270 / DSM 14882 / CIP 104768 / NCIMB 8455) (Ferrobacillus ferrooxidans (strain ATCC 23270)).